Here is a 55-residue protein sequence, read N- to C-terminus: Large ribosomal subunit protein bL33 (55 aa).

This sequence belongs to the bacterial ribosomal protein bL33 family.

This chain is Large ribosomal subunit protein bL33, found in Rhodopseudomonas palustris (strain BisB5).